The primary structure comprises 321 residues: Fibronectin type III domain-containing protein 8 (321 aa).

A Fibronectin type-III domain is found at 175-277 (VPEAPFVCEH…KPYKFATVAT (103 aa)).

The sequence is that of Fibronectin type III domain-containing protein 8 (FNDC8) from Bos taurus (Bovine).